The sequence spans 377 residues: Glycine oxidase (377 aa).

FAD is bound by residues valine 14–isoleucine 15, glutamate 34–lysine 35, alanine 42–serine 43, alanine 47–methionine 49, and valine 180. Substrate contacts are provided by arginine 309 and arginine 336. An FAD-binding site is contributed by histidine 334–leucine 340.

It belongs to the DAO family. ThiO subfamily. In terms of assembly, homotetramer. It depends on FAD as a cofactor.

The enzyme catalyses glycine + O2 + H2O = glyoxylate + H2O2 + NH4(+). The catalysed reaction is N-ethylglycine + O2 + H2O = ethylamine + glyoxylate + H2O2. It catalyses the reaction sarcosine + O2 + H2O = methylamine + glyoxylate + H2O2. It carries out the reaction D-alanine + O2 + H2O = pyruvate + H2O2 + NH4(+). Its pathway is cofactor biosynthesis; thiamine diphosphate biosynthesis. Is inhibited at high substrate concentration. Its function is as follows. Catalyzes the FAD-dependent oxidative deamination of various amines and D-amino acids to yield the corresponding alpha-keto acids, ammonia/amine, and hydrogen peroxide. Oxidizes glycine, sarcosine (N-methylglycine), N-ethylglycine, D-proline, D-alanine, glycine-ethyl ester, and some other D-amino acids. Does not act on L-proline. Is essential for thiamine biosynthesis since the oxidation of glycine catalyzed by ThiO generates the glycine imine intermediate (dehydroglycine) required for the biosynthesis of the thiazole ring of thiamine pyrophosphate. The polypeptide is Glycine oxidase (Geobacillus kaustophilus (strain HTA426)).